We begin with the raw amino-acid sequence, 236 residues long: Uridylate kinase (236 aa).

Residue 10–13 (KLSG) participates in ATP binding. Gly-52 lines the UMP pocket. ATP is bound by residues Gly-53 and Arg-57. Residues Asp-72 and 133 to 140 (TGNPFFTT) contribute to the UMP site. ATP contacts are provided by Thr-160, Tyr-166, and Asp-169.

Belongs to the UMP kinase family. In terms of assembly, homohexamer.

The protein resides in the cytoplasm. It catalyses the reaction UMP + ATP = UDP + ADP. It participates in pyrimidine metabolism; CTP biosynthesis via de novo pathway; UDP from UMP (UMPK route): step 1/1. Its activity is regulated as follows. Inhibited by UTP. Catalyzes the reversible phosphorylation of UMP to UDP. The chain is Uridylate kinase from Polaromonas naphthalenivorans (strain CJ2).